Here is a 258-residue protein sequence, read N- to C-terminus: tRNA pseudouridine synthase A (258 aa).

Asp-52 acts as the Nucleophile in catalysis. Substrate is bound at residue Tyr-111.

Belongs to the tRNA pseudouridine synthase TruA family. In terms of assembly, homodimer.

The enzyme catalyses uridine(38/39/40) in tRNA = pseudouridine(38/39/40) in tRNA. Functionally, formation of pseudouridine at positions 38, 39 and 40 in the anticodon stem and loop of transfer RNAs. This Azorhizobium caulinodans (strain ATCC 43989 / DSM 5975 / JCM 20966 / LMG 6465 / NBRC 14845 / NCIMB 13405 / ORS 571) protein is tRNA pseudouridine synthase A.